The sequence spans 93 residues: UPF0358 protein RBAM_014700 (93 aa).

Belongs to the UPF0358 family.

This Bacillus velezensis (strain DSM 23117 / BGSC 10A6 / LMG 26770 / FZB42) (Bacillus amyloliquefaciens subsp. plantarum) protein is UPF0358 protein RBAM_014700.